Consider the following 244-residue polypeptide: Ribosome maturation factor RimM (244 aa).

Residues 1–58 (MSERDSGSSGPVKAKAAAPRAKTSGQAPFGAFVRKPVEKTEGKAKANAANAGSGATEM) are disordered. The segment covering 13–22 (KAKAAAPRAK) has biased composition (low complexity). A compositionally biased stretch (basic and acidic residues) spans 35–44 (KPVEKTEGKA). Low complexity predominate over residues 45–57 (KANAANAGSGATE). The PRC barrel domain occupies 163 to 244 (ADEFYWVDLL…QITVDWEADY (82 aa)).

It belongs to the RimM family. Binds ribosomal protein uS19.

It is found in the cytoplasm. In terms of biological role, an accessory protein needed during the final step in the assembly of 30S ribosomal subunit, possibly for assembly of the head region. Essential for efficient processing of 16S rRNA. May be needed both before and after RbfA during the maturation of 16S rRNA. It has affinity for free ribosomal 30S subunits but not for 70S ribosomes. The polypeptide is Ribosome maturation factor RimM (Paraburkholderia xenovorans (strain LB400)).